The primary structure comprises 122 residues: Large ribosomal subunit protein uL18 (122 aa).

The protein belongs to the universal ribosomal protein uL18 family. As to quaternary structure, part of the 50S ribosomal subunit; part of the 5S rRNA/L5/L18/L25 subcomplex. Contacts the 5S and 23S rRNAs.

Its function is as follows. This is one of the proteins that bind and probably mediate the attachment of the 5S RNA into the large ribosomal subunit, where it forms part of the central protuberance. The protein is Large ribosomal subunit protein uL18 of Synechococcus sp. (strain JA-3-3Ab) (Cyanobacteria bacterium Yellowstone A-Prime).